The sequence spans 905 residues: DNA gyrase subunit A (905 aa).

The region spanning Ile-35–Leu-524 is the Topo IIA-type catalytic domain. Tyr-123 acts as the O-(5'-phospho-DNA)-tyrosine intermediate in catalysis. The short motif at Gln-551–Gly-557 is the GyrA-box element.

It belongs to the type II topoisomerase GyrA/ParC subunit family. In terms of assembly, heterotetramer, composed of two GyrA and two GyrB chains. In the heterotetramer, GyrA contains the active site tyrosine that forms a transient covalent intermediate with DNA, while GyrB binds cofactors and catalyzes ATP hydrolysis.

It is found in the cytoplasm. The catalysed reaction is ATP-dependent breakage, passage and rejoining of double-stranded DNA.. Its function is as follows. A type II topoisomerase that negatively supercoils closed circular double-stranded (ds) DNA in an ATP-dependent manner to modulate DNA topology and maintain chromosomes in an underwound state. Negative supercoiling favors strand separation, and DNA replication, transcription, recombination and repair, all of which involve strand separation. Also able to catalyze the interconversion of other topological isomers of dsDNA rings, including catenanes and knotted rings. Type II topoisomerases break and join 2 DNA strands simultaneously in an ATP-dependent manner. The protein is DNA gyrase subunit A of Rickettsia prowazekii (strain Madrid E).